A 139-amino-acid chain; its full sequence is Large-conductance mechanosensitive channel (139 aa).

Helical transmembrane passes span 16 to 36 (VIDL…VKSL) and 79 to 99 (GAFV…FLLV).

Belongs to the MscL family. In terms of assembly, homopentamer.

It is found in the cell inner membrane. Channel that opens in response to stretch forces in the membrane lipid bilayer. May participate in the regulation of osmotic pressure changes within the cell. This Caulobacter vibrioides (strain ATCC 19089 / CIP 103742 / CB 15) (Caulobacter crescentus) protein is Large-conductance mechanosensitive channel.